The chain runs to 414 residues: Translation initiation factor 2 subunit gamma (414 aa).

The tr-type G domain occupies Gln-7–Asp-204. The tract at residues Gly-16–Thr-23 is G1. Mg(2+)-binding residues include Asp-19, Thr-23, Gly-44, and Ser-46. Residue Asp-19–Thr-24 participates in GTP binding. The interval Gly-44 to Arg-48 is G2. Positions Asp-91–Gly-94 are G3. Residues Asn-147–Asp-150 and Ser-182–Glu-184 each bind GTP. The G4 stretch occupies residues Asn-147–Asp-150. Residues Ser-182–Glu-184 form a G5 region.

Belongs to the TRAFAC class translation factor GTPase superfamily. Classic translation factor GTPase family. EIF2G subfamily. As to quaternary structure, heterotrimer composed of an alpha, a beta and a gamma chain. Requires Mg(2+) as cofactor.

It catalyses the reaction GTP + H2O = GDP + phosphate + H(+). Functionally, eIF-2 functions in the early steps of protein synthesis by forming a ternary complex with GTP and initiator tRNA. The protein is Translation initiation factor 2 subunit gamma of Halobacterium salinarum (strain ATCC 29341 / DSM 671 / R1).